A 596-amino-acid chain; its full sequence is Arginine--tRNA ligase (596 aa).

The short motif at 123-133 (PNTNKPLHLGH) is the 'HIGH' region element.

The protein belongs to the class-I aminoacyl-tRNA synthetase family. In terms of assembly, monomer.

Its subcellular location is the cytoplasm. The catalysed reaction is tRNA(Arg) + L-arginine + ATP = L-arginyl-tRNA(Arg) + AMP + diphosphate. The sequence is that of Arginine--tRNA ligase from Amoebophilus asiaticus (strain 5a2).